Reading from the N-terminus, the 105-residue chain is Small ribosomal subunit protein uS10c (105 aa).

This sequence belongs to the universal ribosomal protein uS10 family. Part of the 30S ribosomal subunit.

It localises to the plastid. It is found in the chloroplast. Its function is as follows. Involved in the binding of tRNA to the ribosomes. The chain is Small ribosomal subunit protein uS10c from Gracilaria tenuistipitata var. liui (Red alga).